We begin with the raw amino-acid sequence, 434 residues long: Putative nuclease OPG089 (434 aa).

The Mg(2+) site is built by aspartate 33, aspartate 74, glutamate 168, aspartate 170, aspartate 196, and aspartate 198.

The protein belongs to the XPG/RAD2 endonuclease family. FEN1 subfamily. Mg(2+) serves as cofactor.

It is found in the virion. In terms of biological role, putative nuclease that seems to be required for double-strand break repair, homologous recombination, and production of full-length viral genomic DNA. The chain is Putative nuclease OPG089 (OPG089) from Vaccinia virus (strain Copenhagen) (VACV).